The chain runs to 263 residues: Putative alpha/beta hydrolase L404 (263 aa).

Residue Gly-2 is the site of N-myristoyl glycine; by host attachment.

Belongs to the AB hydrolase superfamily.

The polypeptide is Putative alpha/beta hydrolase L404 (Acanthamoeba polyphaga (Amoeba)).